Consider the following 319-residue polypeptide: Acetyl-coenzyme A carboxylase carboxyl transferase subunit alpha (319 aa).

Residues 35 to 296 enclose the CoA carboxyltransferase C-terminal domain; sequence NIDEEVHRLR…KAQLLADLAD (262 aa).

It belongs to the AccA family. As to quaternary structure, acetyl-CoA carboxylase is a heterohexamer composed of biotin carboxyl carrier protein (AccB), biotin carboxylase (AccC) and two subunits each of ACCase subunit alpha (AccA) and ACCase subunit beta (AccD).

It localises to the cytoplasm. The enzyme catalyses N(6)-carboxybiotinyl-L-lysyl-[protein] + acetyl-CoA = N(6)-biotinyl-L-lysyl-[protein] + malonyl-CoA. The protein operates within lipid metabolism; malonyl-CoA biosynthesis; malonyl-CoA from acetyl-CoA: step 1/1. Its function is as follows. Component of the acetyl coenzyme A carboxylase (ACC) complex. First, biotin carboxylase catalyzes the carboxylation of biotin on its carrier protein (BCCP) and then the CO(2) group is transferred by the carboxyltransferase to acetyl-CoA to form malonyl-CoA. In Citrobacter koseri (strain ATCC BAA-895 / CDC 4225-83 / SGSC4696), this protein is Acetyl-coenzyme A carboxylase carboxyl transferase subunit alpha.